A 1393-amino-acid polypeptide reads, in one-letter code: DNA-directed RNA polymerase subunit beta' (1393 aa).

4 residues coordinate Zn(2+): Cys72, Cys74, Cys87, and Cys90. Mg(2+) contacts are provided by Asp463, Asp465, and Asp467. Positions 812, 887, 894, and 897 each coordinate Zn(2+).

Belongs to the RNA polymerase beta' chain family. The RNAP catalytic core consists of 2 alpha, 1 beta, 1 beta' and 1 omega subunit. When a sigma factor is associated with the core the holoenzyme is formed, which can initiate transcription. It depends on Mg(2+) as a cofactor. The cofactor is Zn(2+).

The catalysed reaction is RNA(n) + a ribonucleoside 5'-triphosphate = RNA(n+1) + diphosphate. In terms of biological role, DNA-dependent RNA polymerase catalyzes the transcription of DNA into RNA using the four ribonucleoside triphosphates as substrates. In Chlamydia felis (strain Fe/C-56) (Chlamydophila felis), this protein is DNA-directed RNA polymerase subunit beta'.